The primary structure comprises 155 residues: Ribosomal RNA large subunit methyltransferase H (155 aa).

Residues L72, G103, and 122 to 127 (LSALTL) each bind S-adenosyl-L-methionine.

Belongs to the RNA methyltransferase RlmH family. Homodimer.

Its subcellular location is the cytoplasm. It catalyses the reaction pseudouridine(1915) in 23S rRNA + S-adenosyl-L-methionine = N(3)-methylpseudouridine(1915) in 23S rRNA + S-adenosyl-L-homocysteine + H(+). Specifically methylates the pseudouridine at position 1915 (m3Psi1915) in 23S rRNA. The protein is Ribosomal RNA large subunit methyltransferase H of Salmonella dublin (strain CT_02021853).